Reading from the N-terminus, the 261-residue chain is tRNA pseudouridine synthase A (261 aa).

Residue aspartate 55 is the Nucleophile of the active site. Tyrosine 114 serves as a coordination point for substrate.

The protein belongs to the tRNA pseudouridine synthase TruA family. As to quaternary structure, homodimer.

It carries out the reaction uridine(38/39/40) in tRNA = pseudouridine(38/39/40) in tRNA. Its function is as follows. Formation of pseudouridine at positions 38, 39 and 40 in the anticodon stem and loop of transfer RNAs. This is tRNA pseudouridine synthase A from Paracoccus denitrificans (strain Pd 1222).